The chain runs to 400 residues: Inositol polyphosphate 1-phosphatase (400 aa).

Residue aspartate 54 participates in Li(+) binding. Mg(2+) is bound at residue glutamate 79. Position 80 (glutamate 80) interacts with Li(+). The Mg(2+) site is built by aspartate 153 and isoleucine 155. Residues aspartate 156, serine 157, and threonine 158 each coordinate 1D-myo-inositol 1,4-bisphosphate. The segment covering 238–257 (STRSNSEAQSQGTQNPSSEG) has biased composition (polar residues). The segment at 238–258 (STRSNSEAQSQGTQNPSSEGS) is disordered. 1D-myo-inositol 1,4-bisphosphate is bound by residues serine 268, lysine 270, glycine 290, alanine 291, lysine 294, and threonine 312. Aspartate 317 contributes to the Mg(2+) binding site. Serine 318 carries the phosphoserine modification.

The protein belongs to the inositol monophosphatase superfamily. In terms of assembly, monomer. Mg(2+) is required as a cofactor.

The enzyme catalyses 1D-myo-inositol 1,4-bisphosphate + H2O = 1D-myo-inositol 4-phosphate + phosphate. The catalysed reaction is 1D-myo-inositol 1,3,4-trisphosphate + H2O = 1D-myo-inositol 3,4-bisphosphate + phosphate. Its pathway is signal transduction; phosphatidylinositol signaling pathway. Its activity is regulated as follows. Inhibited by Li(+). Its function is as follows. Mg(2+)-dependent phosphatase that catalyzes the hydrolysis of the 1-position phosphate from inositol 1,4-bisphosphate and inositol 1,3,4-trisphosphate and participates in inositol phosphate metabolism. The protein is Inositol polyphosphate 1-phosphatase of Bos taurus (Bovine).